Reading from the N-terminus, the 290-residue chain is MATRLQDGNSISPEPMLSDGSAAKRPTILVFDSGVGGLSIYNEVRQTLPNAHYLYVFDNEAFPYGEKPEQFIVDRVVAIVGAMWRQHKIDLVIVACNTASTISLPALRERFPCPIIGVVPAIKPAARLTRNGIVGLLATRATVQRSYTHDLISQYAGDCQILQLGTAELVDMAEARLHGELVPLPVLRKLLRPWLRAAEPPDTVVLGCTHFPLLSQELQAVLPEGTRLVDSGSAIARRAAWLVEHDMDVSSLQGETGPNKTYCLVTTPQAVALMPALTRYGFGSSGMLTL.

Substrate contacts are provided by residues 32-33 (DS) and 64-65 (YG). Cys96 serves as the catalytic Proton donor/acceptor. Substrate is bound at residue 97 to 98 (NT). The active-site Proton donor/acceptor is the Cys208. 209 to 210 (TH) is a binding site for substrate.

The protein belongs to the aspartate/glutamate racemases family.

It catalyses the reaction L-glutamate = D-glutamate. It participates in cell wall biogenesis; peptidoglycan biosynthesis. Its function is as follows. Provides the (R)-glutamate required for cell wall biosynthesis. The polypeptide is Glutamate racemase (Sodalis glossinidius (strain morsitans)).